Consider the following 129-residue polypeptide: Transcription antitermination protein NusB (129 aa).

This sequence belongs to the NusB family.

Involved in transcription antitermination. Required for transcription of ribosomal RNA (rRNA) genes. Binds specifically to the boxA antiterminator sequence of the ribosomal RNA (rrn) operons. The sequence is that of Transcription antitermination protein NusB from Bacillus licheniformis (strain ATCC 14580 / DSM 13 / JCM 2505 / CCUG 7422 / NBRC 12200 / NCIMB 9375 / NCTC 10341 / NRRL NRS-1264 / Gibson 46).